The sequence spans 338 residues: UPF0324 membrane protein TauZ (338 aa).

10 helical membrane passes run 12–31 (IEAA…TAQF), 36–55 (YGAP…NFLA), 75–92 (LGVA…LAAL), 96–118 (AIAL…SRLV), 125–147 (ALLT…AAVL), 162–184 (LSVT…FFGF), 191–213 (VFLG…IGPE), 223–245 (LIRV…ARGL), 258–280 (PGFV…PAAV), and 315–337 (AIAL…LHVL).

It belongs to the UPF0324 family.

It localises to the cell membrane. In Paracoccus denitrificans, this protein is UPF0324 membrane protein TauZ (tauZ).